We begin with the raw amino-acid sequence, 1206 residues long: DNA-directed RNA polymerase subunit beta' (1206 aa).

The Zn(2+) site is built by Cys-60, Cys-62, Cys-75, and Cys-78. Residues Asp-449, Asp-451, and Asp-453 each contribute to the Mg(2+) site. Residues Cys-818, Cys-892, Cys-899, and Cys-902 each contribute to the Zn(2+) site.

Belongs to the RNA polymerase beta' chain family. The RNAP catalytic core consists of 2 alpha, 1 beta, 1 beta' and 1 omega subunit. When a sigma factor is associated with the core the holoenzyme is formed, which can initiate transcription. The cofactor is Mg(2+). Requires Zn(2+) as cofactor.

The catalysed reaction is RNA(n) + a ribonucleoside 5'-triphosphate = RNA(n+1) + diphosphate. Functionally, DNA-dependent RNA polymerase catalyzes the transcription of DNA into RNA using the four ribonucleoside triphosphates as substrates. The chain is DNA-directed RNA polymerase subunit beta' from Halalkalibacterium halodurans (strain ATCC BAA-125 / DSM 18197 / FERM 7344 / JCM 9153 / C-125) (Bacillus halodurans).